The chain runs to 60 residues: Potassium channel toxin alpha-KTx 29.2 (60 aa).

The N-terminal stretch at Met1–Ala28 is a signal peptide. 3 disulfide bridges follow: Cys32/Cys51, Cys40/Cys56, and Cys44/Cys58.

The protein belongs to the short scorpion toxin superfamily. Potassium channel inhibitor family. Alpha-KTx 29 subfamily. As to expression, expressed by the venom gland.

Its subcellular location is the secreted. Weakly inhibits the Kv1.3/KCNA3 channel (1 uM of thetoxin inhibits currents by 13.2%) and Kv7.1/KCNQ1 channel (10 uM of the toxin inhibits currents by 27.7%). In Lychas mucronatus (Chinese swimming scorpion), this protein is Potassium channel toxin alpha-KTx 29.2.